Reading from the N-terminus, the 644-residue chain is Fidgetin-like protein 2 (644 aa).

Disordered regions lie at residues 1–36 (MHWTPEHAQPLNQWPEQHLDVSSTTPSPAHKLELPP) and 285–323 (AADGASYPAADDTECRGNGFRSKPPGATEDGTGKYGGGG). The segment covering 10 to 27 (PLNQWPEQHLDVSSTTPS) has biased composition (polar residues). Residues 285–294 (AADGASYPAA) show a composition bias toward low complexity. ATP is bound by residues A390 and 430 to 435 (GCGKAL).

The protein belongs to the AAA ATPase family. It depends on Mg(2+) as a cofactor.

It localises to the cytoplasm. Its subcellular location is the cell cortex. The enzyme catalyses ATP + H2O = ADP + phosphate + H(+). Its function is as follows. Microtubule-severing enzyme that negatively regulates cell migration and wound healing. In migrating cells, targets dynamic microtubules (MTs) at the leading edge and severs them, thereby suppressing motility. Microtubule severing releases ARHGEF2 which activates RHOA, which in turn regulates focal ahesion turnover via focal adhesion kinase, as opposed to F-actin polymerization, to suppress cell motility. Negative regulator of axon regeneration that suppresses axonal growth by selectively severing dynamic MTs in the distal axon shaft and growth cone. Contributes to proper cell branching during endothelial and neuronal development. The sequence is that of Fidgetin-like protein 2 (Fignl2) from Mus musculus (Mouse).